The sequence spans 316 residues: Ribosomal RNA small subunit methyltransferase H (316 aa).

S-adenosyl-L-methionine-binding positions include 35-37, Asp55, Phe79, Asp101, and Gln108; that span reads GGH. The disordered stretch occupies residues 291-316; the sequence is AIKPSKDEVDENTRSRSSVLRIAEKL. Over residues 294-304 the composition is skewed to basic and acidic residues; it reads PSKDEVDENTR.

Belongs to the methyltransferase superfamily. RsmH family.

The protein localises to the cytoplasm. It carries out the reaction cytidine(1402) in 16S rRNA + S-adenosyl-L-methionine = N(4)-methylcytidine(1402) in 16S rRNA + S-adenosyl-L-homocysteine + H(+). In terms of biological role, specifically methylates the N4 position of cytidine in position 1402 (C1402) of 16S rRNA. This Vibrio atlanticus (strain LGP32) (Vibrio splendidus (strain Mel32)) protein is Ribosomal RNA small subunit methyltransferase H.